Here is a 308-residue protein sequence, read N- to C-terminus: UDP-N-acetylenolpyruvoylglucosamine reductase (308 aa).

Residues 30–213 (RVGGAAEWFI…KATTQSHLDH (184 aa)) form the FAD-binding PCMH-type domain. The active site involves Arg176. Ser227 acts as the Proton donor in catalysis. Glu297 is an active-site residue.

It belongs to the MurB family. FAD is required as a cofactor.

The protein localises to the cytoplasm. It catalyses the reaction UDP-N-acetyl-alpha-D-muramate + NADP(+) = UDP-N-acetyl-3-O-(1-carboxyvinyl)-alpha-D-glucosamine + NADPH + H(+). The protein operates within cell wall biogenesis; peptidoglycan biosynthesis. Cell wall formation. The protein is UDP-N-acetylenolpyruvoylglucosamine reductase of Acaryochloris marina (strain MBIC 11017).